Here is a 203-residue protein sequence, read N- to C-terminus: dITP/XTP pyrophosphatase (203 aa).

7–12 (SGNLHK) serves as a coordination point for substrate. Glutamate 47 and aspartate 77 together coordinate Mg(2+). Aspartate 77 acts as the Proton acceptor in catalysis. Substrate is bound by residues serine 78, 160–163 (FGYD), lysine 183, and 188–189 (HR).

Belongs to the HAM1 NTPase family. In terms of assembly, homodimer. Requires Mg(2+) as cofactor.

The catalysed reaction is XTP + H2O = XMP + diphosphate + H(+). The enzyme catalyses dITP + H2O = dIMP + diphosphate + H(+). It carries out the reaction ITP + H2O = IMP + diphosphate + H(+). Functionally, pyrophosphatase that catalyzes the hydrolysis of nucleoside triphosphates to their monophosphate derivatives, with a high preference for the non-canonical purine nucleotides XTP (xanthosine triphosphate), dITP (deoxyinosine triphosphate) and ITP. Seems to function as a house-cleaning enzyme that removes non-canonical purine nucleotides from the nucleotide pool, thus preventing their incorporation into DNA/RNA and avoiding chromosomal lesions. The sequence is that of dITP/XTP pyrophosphatase from Opitutus terrae (strain DSM 11246 / JCM 15787 / PB90-1).